The chain runs to 339 residues: UDP-N-acetylglucosamine--N-acetylmuramyl-(pentapeptide) pyrophosphoryl-undecaprenol N-acetylglucosamine transferase (339 aa).

UDP-N-acetyl-alpha-D-glucosamine contacts are provided by residues 10 to 12 (TGG), N124, R168, S188, I235, and Q280.

It belongs to the glycosyltransferase 28 family. MurG subfamily.

It is found in the cell inner membrane. It catalyses the reaction di-trans,octa-cis-undecaprenyl diphospho-N-acetyl-alpha-D-muramoyl-L-alanyl-D-glutamyl-meso-2,6-diaminopimeloyl-D-alanyl-D-alanine + UDP-N-acetyl-alpha-D-glucosamine = di-trans,octa-cis-undecaprenyl diphospho-[N-acetyl-alpha-D-glucosaminyl-(1-&gt;4)]-N-acetyl-alpha-D-muramoyl-L-alanyl-D-glutamyl-meso-2,6-diaminopimeloyl-D-alanyl-D-alanine + UDP + H(+). The protein operates within cell wall biogenesis; peptidoglycan biosynthesis. Its function is as follows. Cell wall formation. Catalyzes the transfer of a GlcNAc subunit on undecaprenyl-pyrophosphoryl-MurNAc-pentapeptide (lipid intermediate I) to form undecaprenyl-pyrophosphoryl-MurNAc-(pentapeptide)GlcNAc (lipid intermediate II). The protein is UDP-N-acetylglucosamine--N-acetylmuramyl-(pentapeptide) pyrophosphoryl-undecaprenol N-acetylglucosamine transferase of Pseudothermotoga lettingae (strain ATCC BAA-301 / DSM 14385 / NBRC 107922 / TMO) (Thermotoga lettingae).